A 259-amino-acid chain; its full sequence is Thiazole synthase (259 aa).

K95 acts as the Schiff-base intermediate with DXP in catalysis. Residues G156, 182–183, and 204–205 contribute to the 1-deoxy-D-xylulose 5-phosphate site; these read AG and AS.

It belongs to the ThiG family. As to quaternary structure, homotetramer. Forms heterodimers with either ThiH or ThiS.

It is found in the cytoplasm. The catalysed reaction is [ThiS sulfur-carrier protein]-C-terminal-Gly-aminoethanethioate + 2-iminoacetate + 1-deoxy-D-xylulose 5-phosphate = [ThiS sulfur-carrier protein]-C-terminal Gly-Gly + 2-[(2R,5Z)-2-carboxy-4-methylthiazol-5(2H)-ylidene]ethyl phosphate + 2 H2O + H(+). The protein operates within cofactor biosynthesis; thiamine diphosphate biosynthesis. Its function is as follows. Catalyzes the rearrangement of 1-deoxy-D-xylulose 5-phosphate (DXP) to produce the thiazole phosphate moiety of thiamine. Sulfur is provided by the thiocarboxylate moiety of the carrier protein ThiS. In vitro, sulfur can be provided by H(2)S. The protein is Thiazole synthase of Corynebacterium aurimucosum (strain ATCC 700975 / DSM 44827 / CIP 107346 / CN-1) (Corynebacterium nigricans).